A 130-amino-acid polypeptide reads, in one-letter code: Aspartate 1-decarboxylase (130 aa).

The active-site Schiff-base intermediate with substrate; via pyruvic acid is the Ser-25. A Pyruvic acid (Ser) modification is found at Ser-25. Thr-57 lines the substrate pocket. Tyr-58 acts as the Proton donor in catalysis. Gly-73 to Thr-75 contacts substrate.

It belongs to the PanD family. In terms of assembly, heterooctamer of four alpha and four beta subunits. Pyruvate serves as cofactor. Post-translationally, is synthesized initially as an inactive proenzyme, which is activated by self-cleavage at a specific serine bond to produce a beta-subunit with a hydroxyl group at its C-terminus and an alpha-subunit with a pyruvoyl group at its N-terminus.

The protein resides in the cytoplasm. It catalyses the reaction L-aspartate + H(+) = beta-alanine + CO2. Its pathway is cofactor biosynthesis; (R)-pantothenate biosynthesis; beta-alanine from L-aspartate: step 1/1. Functionally, catalyzes the pyruvoyl-dependent decarboxylation of aspartate to produce beta-alanine. The protein is Aspartate 1-decarboxylase of Lactiplantibacillus plantarum (strain ATCC BAA-793 / NCIMB 8826 / WCFS1) (Lactobacillus plantarum).